Here is a 144-residue protein sequence, read N- to C-terminus: Large ribosomal subunit protein uL16 (144 aa).

Positions 1–17 (MLQPKKTKFRRQQKGRA) are enriched in basic residues. Positions 1 to 22 (MLQPKKTKFRRQQKGRAKGNAQ) are disordered.

It belongs to the universal ribosomal protein uL16 family. Part of the 50S ribosomal subunit.

Its function is as follows. Binds 23S rRNA and is also seen to make contacts with the A and possibly P site tRNAs. The sequence is that of Large ribosomal subunit protein uL16 from Bacteroides fragilis (strain ATCC 25285 / DSM 2151 / CCUG 4856 / JCM 11019 / LMG 10263 / NCTC 9343 / Onslow / VPI 2553 / EN-2).